A 493-amino-acid chain; its full sequence is Sodium-coupled neutral amino acid symporter 2 (493 aa).

The Cytoplasmic segment spans residues 1 to 72 (MNNAEVLNVA…LPGTTSFGMS (72 aa)). The segment at 1–92 (MNNAEVLNVA…SGILGLSYAM (92 aa)) is regulates protein turnover upon amino acid deprivation. The chain crosses the membrane as a helical span at residues 73–92 (VFNLSNAIVGSGILGLSYAM). Asn78 lines the Na(+) pocket. At 93-98 (ANTGIA) the chain is on the extracellular side. The helical transmembrane segment at 99–119 (LFMILLVFVTVFSLYSIHLLL) threads the bilayer. Residues 120–154 (KTANEGGSLLYEQLGLKAFGIPGKLAASGSVTLQN) lie on the Cytoplasmic side of the membrane. A helical membrane pass occupies residues 155-173 (IGAMSSYLYIVKYELPLVI). Topologically, residues 174-184 (KALMDIKESNG) are extracellular. Residues 185–205 (EWYLNGDYLVIMVSLAIILPL) form a helical membrane-spanning segment. Residues 206 to 213 (SLLRNLGY) are Cytoplasmic-facing. The helical transmembrane segment at 214–234 (LGYTSGFSPLCMVFFLIVVIY) threads the bilayer. Topologically, residues 235–279 (KKFEIPCPLEAMNMTSNSSSHDHMAHNETDDEMCKPKYFVFNSQT) are extracellular. An intrachain disulfide couples Cys241 to Cys268. Residues Asn247, Asn251, and Asn261 are each glycosylated (N-linked (GlcNAc...) asparagine). The helical transmembrane segment at 280–300 (VYAVPILTFSFVCHPAVLPIY) threads the bilayer. The Cytoplasmic portion of the chain corresponds to 301 to 316 (QELKGRSRRRMMNVSN). A helical membrane pass occupies residues 317–337 (VSFFAMFIMYLLAALFGYLTF). The Extracellular portion of the chain corresponds to 338 to 358 (YSKVEPELLHTYSKVFGAGVI). A helical transmembrane segment spans residues 359-379 (FVVVRLAVLMAVTLTVPIVIF). Thr373 is a binding site for Na(+). The Cytoplasmic segment spans residues 380–400 (PIRSSLNELFCSGKDFAWIRH). Residues 401–421 (ILITFLILAFTNVLVIFVPTI) form a helical membrane-spanning segment. Topologically, residues 422–423 (RD) are extracellular. The helical transmembrane segment at 424–444 (IFGFIGASAAAMLVFILPSAF) threads the bilayer. The Cytoplasmic segment spans residues 445-459 (YIRLVKKESMKSVQK). The helical transmembrane segment at 460–482 (IGALLFLIGGIIVMIGSMTLIIL) threads the bilayer. Residues 483–493 (DWIHNSTSGGN) lie on the Extracellular side of the membrane.

It belongs to the amino acid/polyamine transporter 2 family.

Its subcellular location is the cell membrane. It carries out the reaction L-alanine(in) + Na(+)(in) = L-alanine(out) + Na(+)(out). The catalysed reaction is glycine(in) + Na(+)(in) = glycine(out) + Na(+)(out). It catalyses the reaction L-serine(in) + Na(+)(in) = L-serine(out) + Na(+)(out). The enzyme catalyses L-proline(in) + Na(+)(in) = L-proline(out) + Na(+)(out). It carries out the reaction L-methionine(in) + Na(+)(in) = L-methionine(out) + Na(+)(out). The catalysed reaction is L-histidine(in) + Na(+)(in) = L-histidine(out) + Na(+)(out). It catalyses the reaction L-asparagine(in) + Na(+)(in) = L-asparagine(out) + Na(+)(out). The enzyme catalyses L-glutamine(in) + Na(+)(in) = L-glutamine(out) + Na(+)(out). It carries out the reaction L-threonine(in) + Na(+)(in) = L-threonine(out) + Na(+)(out). The catalysed reaction is L-leucine(in) + Na(+)(in) = L-leucine(out) + Na(+)(out). It catalyses the reaction L-phenylalanine(in) + Na(+)(in) = L-phenylalanine(out) + Na(+)(out). With respect to regulation, inhibited by N-methyl-D-glucamine. Inhibited by choline. Allosteric regulation of sodium ions binding by pH. In terms of biological role, symporter that cotransports neutral amino acids and sodium ions from the extracellular to the intracellular side of the cell membrane. The transport is pH-sensitive, Li(+)-intolerant, electrogenic, driven by the Na(+) electrochemical gradient and cotransports of neutral amino acids and sodium ions with a stoichiometry of 1:1. The polypeptide is Sodium-coupled neutral amino acid symporter 2 (Xenopus tropicalis (Western clawed frog)).